Here is a 329-residue protein sequence, read N- to C-terminus: MIDNNQTCAAGQDSVPYVTCMIYVLEEWLGVEQLEDYLNFANHLLWVFTPLILLILPYFTIFLLYLTIIFLHIYKRKNVLKEAYSHNLWDGARKTVATLWDGHAAVWHGYEVHGMEKIPEGAALIIFYHGAIPIDFYYFMAKIFIQKGRTCRVVADHFVFKIPGFSLLLDVFCALHGPREKCVEILRSGHLLAISPGGVREALLSDETYNIIWGNRKGFAQVAIDAKVPIIPMFTQNIREGFRSLGGTRLFKWLYEKFRYPFAPMYGGFPVKLRTFLGDPIPYDPKVTAEELAEKTKNAVQALIDKHQRIPGNIRSALLDRFHKEQKAH.

Over 1–50 (MIDNNQTCAAGQDSVPYVTCMIYVLEEWLGVEQLEDYLNFANHLLWVFTP) the chain is Lumenal. N-linked (GlcNAc...) asparagine glycosylation is present at asparagine 5. Residues 51-71 (LILLILPYFTIFLLYLTIIFL) form a helical membrane-spanning segment. At 72-120 (HIYKRKNVLKEAYSHNLWDGARKTVATLWDGHAAVWHGYEVHGMEKIPE) the chain is on the cytoplasmic side. A helical transmembrane segment spans residues 121 to 141 (GAALIIFYHGAIPIDFYYFMA). Residue histidine 129 is part of the active site. The Lumenal portion of the chain corresponds to 142 to 329 (KIFIQKGRTC…DRFHKEQKAH (188 aa)).

Belongs to the diacylglycerol acyltransferase family. Highly divergent. In terms of tissue distribution, widely expressed, with highest level in the brain, followed by lung and duodenum, and lowest levels in tongue, testis, skin and ileum.

It localises to the endoplasmic reticulum membrane. It catalyses the reaction a 1,2-diacylglycerol + a 1,2-diacyl-sn-glycero-3-phosphocholine = a triacylglycerol + a 1-acyl-sn-glycero-3-phosphocholine. The catalysed reaction is a 1-O-alkyl-2-acyl-sn-glycero-3-phosphocholine + a 1,2-diacylglycerol = a 1-O-alkyl-sn-glycero-3-phosphocholine + a triacylglycerol. The enzyme catalyses a 2-acylglycerol + an acyl-CoA = a 1,2-diacylglycerol + CoA. It carries out the reaction an acyl-CoA + a 1,2-diacyl-sn-glycerol = a triacyl-sn-glycerol + CoA. It catalyses the reaction 2-(9Z-octadecenoyl)-glycerol + (9Z)-octadecenoyl-CoA = 1,2-di-(9Z-octadecenoyl)-glycerol + CoA. The catalysed reaction is 1,2-di-(9Z-octadecenoyl)-sn-glycerol + (9Z)-octadecenoyl-CoA = 1,2,3-tri-(9Z-octadecenoyl)-glycerol + CoA. With respect to regulation, acyltransferase activity is specifically inhibited by TMX1 at the endoplasmic reticulum, restricting accumulation of triacylglycerol. Its function is as follows. Catalytic subunit of the alternative triglyceride biosynthesis pathway, which mediates formation of triacylglycerol from diacylglycerol and membrane phospholipids. Synthesizes triacylglycerol at the expense of membrane phospholipids, such as phosphatidylcholine (PC) and its ether-linked form (ePC), thereby altering the composition of membranes. The alternative triglyceride biosynthesis pathway is probably required to provide the energy required for rapid growth when fuel sources are limiting. It maintains mitochondrial function during periods of extracellular lipid starvation. Can also use acyl-CoA as donor: acts as a acyl-CoA:monoacylglycerol acyltransferase (MGAT), but also shows acyl-CoA:diacylglycerol acyltransferase (DGAT) activity. This chain is DGAT1/2-independent enzyme synthesizing storage lipids, found in Mus musculus (Mouse).